Here is a 232-residue protein sequence, read N- to C-terminus: Phosphatidylserine decarboxylase proenzyme (232 aa).

Ser190 functions as the Schiff-base intermediate with substrate; via pyruvic acid in the catalytic mechanism. At Ser190 the chain carries Pyruvic acid (Ser); by autocatalysis.

This sequence belongs to the phosphatidylserine decarboxylase family. PSD-A subfamily. In terms of assembly, heterodimer of a large membrane-associated beta subunit and a small pyruvoyl-containing alpha subunit. Requires pyruvate as cofactor. In terms of processing, is synthesized initially as an inactive proenzyme. Formation of the active enzyme involves a self-maturation process in which the active site pyruvoyl group is generated from an internal serine residue via an autocatalytic post-translational modification. Two non-identical subunits are generated from the proenzyme in this reaction, and the pyruvate is formed at the N-terminus of the alpha chain, which is derived from the carboxyl end of the proenzyme. The post-translation cleavage follows an unusual pathway, termed non-hydrolytic serinolysis, in which the side chain hydroxyl group of the serine supplies its oxygen atom to form the C-terminus of the beta chain, while the remainder of the serine residue undergoes an oxidative deamination to produce ammonia and the pyruvoyl prosthetic group on the alpha chain.

Its subcellular location is the cell membrane. The catalysed reaction is a 1,2-diacyl-sn-glycero-3-phospho-L-serine + H(+) = a 1,2-diacyl-sn-glycero-3-phosphoethanolamine + CO2. The protein operates within phospholipid metabolism; phosphatidylethanolamine biosynthesis; phosphatidylethanolamine from CDP-diacylglycerol: step 2/2. Catalyzes the formation of phosphatidylethanolamine (PtdEtn) from phosphatidylserine (PtdSer). This Cereibacter sphaeroides (strain KD131 / KCTC 12085) (Rhodobacter sphaeroides) protein is Phosphatidylserine decarboxylase proenzyme.